Consider the following 158-residue polypeptide: Peptide methionine sulfoxide reductase MsrA (158 aa).

Residue Cys-10 is part of the active site.

It belongs to the MsrA Met sulfoxide reductase family.

It carries out the reaction L-methionyl-[protein] + [thioredoxin]-disulfide + H2O = L-methionyl-(S)-S-oxide-[protein] + [thioredoxin]-dithiol. The catalysed reaction is [thioredoxin]-disulfide + L-methionine + H2O = L-methionine (S)-S-oxide + [thioredoxin]-dithiol. Has an important function as a repair enzyme for proteins that have been inactivated by oxidation. Catalyzes the reversible oxidation-reduction of methionine sulfoxide in proteins to methionine. This Alkaliphilus metalliredigens (strain QYMF) protein is Peptide methionine sulfoxide reductase MsrA.